The following is a 241-amino-acid chain: MGQKVSPNVLRLGIVRDWEDTWYAEKDQYVKWLDQDIKIREGVLKLLKDAAVSKIKIERTNSNITLIIRTARPAIVLGQEGKNVSNIATAVQKIAKDRNLKVEVKVIEVKNPDADRTLVARWIGEQITNRASFRTVQKLAIRKALKAGVKGIKTSVSGRLGGVEMARTEGYIEGSVPLSTLRADIDYALYEAPTTYGQIGVKVWINHGEVIGGQSQRVSEKAPMNNDRRFNNKNNNRGGRK.

One can recognise a KH type-2 domain in the interval 39 to 108 (IREGVLKLLK…NLKVEVKVIE (70 aa)). The tract at residues 215–241 (SQRVSEKAPMNNDRRFNNKNNNRGGRK) is disordered. Over residues 232–241 (NKNNNRGGRK) the composition is skewed to low complexity.

It belongs to the universal ribosomal protein uS3 family. Part of the 30S ribosomal subunit. Forms a tight complex with proteins S10 and S14.

Functionally, binds the lower part of the 30S subunit head. Binds mRNA in the 70S ribosome, positioning it for translation. The sequence is that of Small ribosomal subunit protein uS3 from Mesoplasma florum (Acholeplasma florum).